A 217-amino-acid polypeptide reads, in one-letter code: Probable GTP-binding protein EngB (217 aa).

In terms of domain architecture, EngB-type G spans 29–213; sequence GPLEVAFAGR…RQAIAETVGI (185 aa). Residues 37–44, 64–68, 91–94, 158–161, and 192–194 contribute to the GTP site; these read GRSNVGKS, GRTQE, DMPG, TKTD, and TSS. Residues S44 and T66 each contribute to the Mg(2+) site.

It belongs to the TRAFAC class TrmE-Era-EngA-EngB-Septin-like GTPase superfamily. EngB GTPase family. The cofactor is Mg(2+).

Necessary for normal cell division and for the maintenance of normal septation. The polypeptide is Probable GTP-binding protein EngB (Rhizobium johnstonii (strain DSM 114642 / LMG 32736 / 3841) (Rhizobium leguminosarum bv. viciae)).